The following is a 257-amino-acid chain: Trans-aconitate 2-methyltransferase (257 aa).

The protein belongs to the methyltransferase superfamily. Tam family.

The protein resides in the cytoplasm. The catalysed reaction is trans-aconitate + S-adenosyl-L-methionine = (E)-3-(methoxycarbonyl)pent-2-enedioate + S-adenosyl-L-homocysteine. Its function is as follows. Catalyzes the S-adenosylmethionine monomethyl esterification of trans-aconitate. The chain is Trans-aconitate 2-methyltransferase from Sinorhizobium medicae (strain WSM419) (Ensifer medicae).